Here is a 1285-residue protein sequence, read N- to C-terminus: Ataxin-2 (1285 aa).

Disordered regions lie at residues 1–85 (MRSS…PGSR), 111–178 (ARAC…SPGA), and 197–224 (PVASSSAAAGGGRPGLGRGRNSSKGLPQ). The span at 29–38 (SLPRTARRGG) shows a compositional bias: basic residues. Pro residues predominate over residues 48-65 (AGPPPRGPGAPPRGPRSP). The span at 128 to 144 (SSSARPAPGCPRPACEP) shows a compositional bias: low complexity. Positions 205-214 (AGGGRPGLGR) are enriched in gly residues. Phosphoserine occurs at positions 218 and 219. The Sm domain occupies 237 to 314 (RMVHILTSVV…FVVVQFKDTD (78 aa)). Phosphoserine occurs at positions 362 and 435. 2 stretches are compositionally biased toward basic and acidic residues: residues 428–440 (ALENDDRSEEEKY) and 447–461 (CSDREGHGPNTRDNK). Disordered regions lie at residues 428–925 (ALEN…HQQP) and 1111–1191 (AALH…QSSF). A Phosphoserine modification is found at Ser-477. The span at 498–510 (ASHTSDFNPNAGS) shows a compositional bias: polar residues. Ser-523 is modified (phosphoserine). Residues 526 to 552 (PSHSSRPPSRYQSGPNSLPPRAATHTR) are compositionally biased toward low complexity. The segment covering 554 to 567 (PSRPPSRPSRPPSH) has biased composition (pro residues). Residue Ser-593 is modified to Phosphoserine. Residues 596 to 606 (AQRHPRNHRVS) show a composition bias toward basic residues. The residue at position 609 (Arg-609) is an Asymmetric dimethylarginine; alternate. An Omega-N-methylarginine; alternate modification is found at Arg-609. Ser-611 and Ser-653 each carry phosphoserine. Polar residues predominate over residues 662–672 (PRQSSIGNSPS). Residues 685 to 694 (PAEAVSMPVP) show a composition bias toward low complexity. The residue at position 697 (Ser-697) is a Phosphoserine. Thr-710 is modified (phosphothreonine). The span at 737–746 (ASETSPSFSK) shows a compositional bias: polar residues. 2 positions are modified to phosphoserine: Ser-741 and Ser-753. The span at 757 to 773 (SEHRKQIDDLKKFKNDF) shows a compositional bias: basic and acidic residues. A compositionally biased stretch (polar residues) spans 776 to 789 (QPSSTSESMDQLLS). A compositionally biased stretch (basic and acidic residues) spans 790 to 813 (KNREGEKSRDLIKDKTEASAKDSF). The span at 814–838 (IDSSSSSSNCTSGSSKTNSPSISPS) shows a compositional bias: low complexity. Residues Ser-827, Ser-828, Ser-832, Ser-836, Ser-838, Ser-859, and Ser-860 each carry the phosphoserine modification. Over residues 851 to 862 (VTSQGVQTSSPA) the composition is skewed to polar residues. Lys-864 participates in a covalent cross-link: Glycyl lysine isopeptide (Lys-Gly) (interchain with G-Cter in SUMO2). Over residues 864 to 881 (KQEKDDREEKKDTTEQVR) the composition is skewed to basic and acidic residues. 2 stretches are compositionally biased toward low complexity: residues 896 to 907 (SFSQPKPSTTPT) and 1128 to 1165 (GQQQSQHGGSHPAPSPVQHHQHQAAQALHLASPQQQSA).

The protein belongs to the ataxin-2 family. As to quaternary structure, interacts with RBFOX1. Monomer. Can also form homodimers. Interacts with polyribosomes. Interacts with EGFR. Interacts with SH3GL3. Interacts with SH3GL2, SH3KBP1 and CBL. Interacts with ATXN2L. In terms of tissue distribution, expressed in the heart, lung, liver, kidney, skeletal muscle, spleen and intestine. Predominant expression was seen in the brain where a high level expression was found in the pyramidal cortical neurons, large brain stem neurons and cerebellar Purkinje cells. All three isoforms were found in all the tissues except skeletal muscle where only isoform 1 was found.

The protein resides in the cytoplasm. Involved in EGFR trafficking, acting as negative regulator of endocytic EGFR internalization at the plasma membrane. The chain is Ataxin-2 (Atxn2) from Mus musculus (Mouse).